The following is a 323-amino-acid chain: Ribonuclease Z (323 aa).

Positions 62, 64, 66, 67, 144, 215, and 273 each coordinate Zn(2+). Asp66 acts as the Proton acceptor in catalysis.

Belongs to the RNase Z family. In terms of assembly, homodimer. Requires Zn(2+) as cofactor.

The enzyme catalyses Endonucleolytic cleavage of RNA, removing extra 3' nucleotides from tRNA precursor, generating 3' termini of tRNAs. A 3'-hydroxy group is left at the tRNA terminus and a 5'-phosphoryl group is left at the trailer molecule.. In terms of biological role, zinc phosphodiesterase, which displays some tRNA 3'-processing endonuclease activity. Probably involved in tRNA maturation, by removing a 3'-trailer from precursor tRNA. This is Ribonuclease Z from Synechococcus sp. (strain WH7803).